Consider the following 512-residue polypeptide: GMP synthase [glutamine-hydrolyzing] (512 aa).

The Glutamine amidotransferase type-1 domain maps to 7–197 (TIIVLDFGSQ…VFGVCGCSEG (191 aa)). Cysteine 84 functions as the Nucleophile in the catalytic mechanism. Active-site residues include histidine 171 and glutamate 173. The GMPS ATP-PPase domain occupies 198–387 (WNMENFIEVE…LGIPDEIVWR (190 aa)). Position 225–231 (225–231 (SGGVDSS)) interacts with ATP.

In terms of assembly, homodimer.

The enzyme catalyses XMP + L-glutamine + ATP + H2O = GMP + L-glutamate + AMP + diphosphate + 2 H(+). The protein operates within purine metabolism; GMP biosynthesis; GMP from XMP (L-Gln route): step 1/1. Its function is as follows. Catalyzes the synthesis of GMP from XMP. This Bacillus anthracis protein is GMP synthase [glutamine-hydrolyzing].